We begin with the raw amino-acid sequence, 402 residues long: Phosphoglycerate kinase (402 aa).

Substrate-binding positions include 29–31, R45, 69–72, R125, and R158; these read DFN and HLGR. ATP is bound by residues K209, E331, and 357–360; that span reads GGDT.

The protein belongs to the phosphoglycerate kinase family.

It is found in the cytoplasm. It carries out the reaction (2R)-3-phosphoglycerate + ATP = (2R)-3-phospho-glyceroyl phosphate + ADP. The protein operates within carbohydrate degradation; glycolysis; pyruvate from D-glyceraldehyde 3-phosphate: step 2/5. In Helicobacter pylori (strain J99 / ATCC 700824) (Campylobacter pylori J99), this protein is Phosphoglycerate kinase (pgk).